Here is a 509-residue protein sequence, read N- to C-terminus: Putative (R)-citramalate synthase CimA (509 aa).

The 254-residue stretch at 14–267 (VRIFDTTLRD…DTGIRTERLT (254 aa)) folds into the Pyruvate carboxyltransferase domain.

It belongs to the alpha-IPM synthase/homocitrate synthase family. In terms of assembly, homodimer.

The enzyme catalyses pyruvate + acetyl-CoA + H2O = (3R)-citramalate + CoA + H(+). It functions in the pathway amino-acid biosynthesis; L-isoleucine biosynthesis; 2-oxobutanoate from pyruvate: step 1/3. Its function is as follows. Catalyzes the condensation of pyruvate and acetyl-coenzyme A to form (R)-citramalate. In Methanopyrus kandleri (strain AV19 / DSM 6324 / JCM 9639 / NBRC 100938), this protein is Putative (R)-citramalate synthase CimA (cimA).